Consider the following 143-residue polypeptide: Cytochrome c-type biogenesis protein CcmE (143 aa).

Residues 1–8 (MTPVRRRK) lie on the Cytoplasmic side of the membrane. Residues 9–29 (LFILLFALSVLSAAAALVLYA) traverse the membrane as a helical; Signal-anchor for type II membrane protein segment. Over 30–143 (LRQNISLFYT…KSALADKVKQ (114 aa)) the chain is Periplasmic. Residues His-124 and Tyr-128 each contribute to the heme site.

It belongs to the CcmE/CycJ family.

It is found in the cell inner membrane. Functionally, heme chaperone required for the biogenesis of c-type cytochromes. Transiently binds heme delivered by CcmC and transfers the heme to apo-cytochromes in a process facilitated by CcmF and CcmH. In Legionella pneumophila (strain Lens), this protein is Cytochrome c-type biogenesis protein CcmE.